The following is a 79-amino-acid chain: Orally active insecticidal peptide (79 aa).

The first 19 residues, 1–19 (MRVLFIIAGLALLSVVCYT), serve as a signal peptide directing secretion. Positions 20–44 (SEMKERSSFNEVLSEFFAADEPQER) are excised as a propeptide. 3 disulfide bridges follow: cysteine 46–cysteine 61, cysteine 53–cysteine 66, and cysteine 60–cysteine 73. At alanine 77 the chain carries Alanine amide.

This sequence belongs to the neurotoxin 03 (Tx2) family. 01 subfamily. Expressed by the venom gland.

The protein localises to the secreted. Its function is as follows. Probable ion channel inhibitor. Shows insecticidal activity when injected into mealworms. This chain is Orally active insecticidal peptide, found in Selenotypus plumipes (Australian featherleg tarantula).